Consider the following 98-residue polypeptide: NADH-ubiquinone oxidoreductase chain 4L (98 aa).

The next 3 membrane-spanning stretches (helical) occupy residues 1-21 (MPLI…GMLI), 29-49 (SLLC…LMAL), and 61-81 (VVLL…LVSI).

This sequence belongs to the complex I subunit 4L family. Core subunit of respiratory chain NADH dehydrogenase (Complex I) which is composed of 45 different subunits.

The protein localises to the mitochondrion inner membrane. It carries out the reaction a ubiquinone + NADH + 5 H(+)(in) = a ubiquinol + NAD(+) + 4 H(+)(out). In terms of biological role, core subunit of the mitochondrial membrane respiratory chain NADH dehydrogenase (Complex I) which catalyzes electron transfer from NADH through the respiratory chain, using ubiquinone as an electron acceptor. Part of the enzyme membrane arm which is embedded in the lipid bilayer and involved in proton translocation. The chain is NADH-ubiquinone oxidoreductase chain 4L (MT-ND4L) from Hylobates lar (Lar gibbon).